The sequence spans 584 residues: Probable DNA ligase (584 aa).

Glu-248 contributes to the ATP binding site. Lys-250 serves as the catalytic N6-AMP-lysine intermediate. The ATP site is built by Arg-255, Arg-270, Glu-299, Phe-339, Arg-416, and Lys-422.

The protein belongs to the ATP-dependent DNA ligase family. Mg(2+) serves as cofactor.

It carries out the reaction ATP + (deoxyribonucleotide)n-3'-hydroxyl + 5'-phospho-(deoxyribonucleotide)m = (deoxyribonucleotide)n+m + AMP + diphosphate.. Functionally, DNA ligase that seals nicks in double-stranded DNA during DNA replication, DNA recombination and DNA repair. The chain is Probable DNA ligase from Aquifex aeolicus (strain VF5).